The following is a 203-amino-acid chain: MDFLQRDTVTIAKDLLGVRIIYHDELQTFTGYIVETEAYIGTKDRAAHGYNGKRTPKVESLYKQGGTIYAHVMHTHLLINFVTQLEGQPEGVLIRAIEPEEGIELMAINRGKNGFELTNGPGKWTKAFNIPRHLDGSKLNEGRLKIDTKNRKYPKEIEASGRIGIPNKGEWTHKPLRFTVKGNPYISRMKKSDMRQPEYTWRI.

Belongs to the DNA glycosylase MPG family.

The protein is Putative 3-methyladenine DNA glycosylase of Staphylococcus saprophyticus subsp. saprophyticus (strain ATCC 15305 / DSM 20229 / NCIMB 8711 / NCTC 7292 / S-41).